The sequence spans 342 residues: Probable alcohol acetyltransferase (342 aa).

The transit peptide at 1–38 directs the protein to the mitochondrion; the sequence is MMILGKAGILAQYGTIYVRQNTIRNNLSSCIFKQSLCA. The propeptide at 39 to 46 is removed in mature form; sequence FHSLAKVL. The region spanning 75-326 is the AB hydrolase-1 domain; it reads PPIIILHGLF…AGHWVNAEKP (252 aa). Catalysis depends on charge relay system residues S152 and H319.

It belongs to the AB hydrolase superfamily. In terms of processing, processed by both the mitochondrial processing peptidase (MPP) and the mitochondrial octapeptidyl aminopeptidase (OCT1).

It is found in the mitochondrion. In terms of biological role, probable alcohol acetyltransferase that uses acetyl-CoA to synthesize acetate esters from various alcohols. Not involved in the synthesis of ethyl acetate. The polypeptide is Probable alcohol acetyltransferase (IMO32) (Saccharomyces cerevisiae (strain ATCC 204508 / S288c) (Baker's yeast)).